A 435-amino-acid polypeptide reads, in one-letter code: Enolase (435 aa).

Q163 is a binding site for (2R)-2-phosphoglycerate. Residue E205 is the Proton donor of the active site. Positions 243, 292, and 319 each coordinate Mg(2+). (2R)-2-phosphoglycerate is bound by residues K344, R373, S374, and K395. Catalysis depends on K344, which acts as the Proton acceptor.

Belongs to the enolase family. In terms of assembly, homooctamer, a tetramer of homodimers. Mg(2+) serves as cofactor.

The protein localises to the cytoplasm. Its subcellular location is the secreted. It localises to the cell surface. It is found in the cell wall. It catalyses the reaction (2R)-2-phosphoglycerate = phosphoenolpyruvate + H2O. Its pathway is carbohydrate degradation; glycolysis; pyruvate from D-glyceraldehyde 3-phosphate: step 4/5. Functionally, catalyzes the reversible conversion of 2-phosphoglycerate (2-PG) into phosphoenolpyruvate (PEP). It is essential for the degradation of carbohydrates via glycolysis. 'Moonlights' as a plasminogen receptor. Binds plasminogen and more weakly plasmin when expressed on the bacterial cell surface; probably has more than one plasmin(ogen) binding site, may bind via Lys residues. Plasminogen binding potentially allows the bacterium to acquire surface-associated proteolytic activity, which in turn contributes to tissue invasion and virulence. The polypeptide is Enolase (Streptococcus pyogenes serotype M6 (strain ATCC BAA-946 / MGAS10394)).